The sequence spans 620 residues: Ferric/cupric reductase transmembrane component 7 (620 aa).

At 1 to 45 (MIEERDLVLSNGIHCIADIHSELYARLKKESQAATPWVYQKQYGK) the chain is on the extracellular side. Residues 46 to 66 (FVTYFVAVIIFLSLIKKLAFM) form a helical membrane-spanning segment. Residues 67 to 107 (YYDSSEEFLPEKKNSPTTPSVFLARIMTKLVAFNRYICYRK) lie on the Cytoplasmic side of the membrane. Residues 108-128 (FPTLIFSYLGIPTSVGTFLVV) form a helical membrane-spanning segment. At 129 to 167 (MATTLYTLLYCFVPHPFYRPCAGFGSPPLSVRAGIMAIS) the chain is on the extracellular side. The 160-residue stretch at 161 to 320 (AGIMAISLVP…LAVKGYLRPG (160 aa)) folds into the Ferric oxidoreductase domain. A helical membrane pass occupies residues 168 to 188 (LVPFVFSLSGKINVIGWLVGL). Residues 189–194 (SYEKIN) are Cytoplasmic-facing. A helical transmembrane segment spans residues 195-215 (IYHQWASILCLFFSWVHVIPF). Positions 197 and 211 each coordinate heme. Residues 216–237 (LRQARHEGGYERMHQRWKASDM) are Extracellular-facing. Residues 238 to 258 (WRSGVPPILFLNLLWLSSLPI) form a helical membrane-spanning segment. Residues 259–265 (ARRHFYE) are Cytoplasmic-facing. The chain crosses the membrane as a helical span at residues 266–286 (IFLQLHWILAVGFYISLFYHV). The heme site is built by His-271 and His-285. The Extracellular segment spans residues 287 to 292 (YPELNS). The chain crosses the membrane as a helical span at residues 293-313 (HMYLVATIVVWFAQLFYRLAV). Over 314-620 (KGYLRPGRSF…CYLHSESFGY (307 aa)) the chain is Cytoplasmic. Positions 321 to 419 (RSFMASTIAN…DGPYGGIERD (99 aa)) constitute an FAD-binding FR-type domain. 369-375 (HPFSIFP) provides a ligand contact to FAD. An NADP(+)-binding site is contributed by 411–414 (GPYG). The segment at 519 to 543 (SDQSDLAKREKDTEFGQDDTESNST) is disordered. Positions 523 to 532 (DLAKREKDTE) are enriched in basic and acidic residues. Position 578 to 579 (578 to 579 (CF)) interacts with NADP(+).

Belongs to the ferric reductase (FRE) family. It depends on FAD as a cofactor.

It localises to the cell membrane. It carries out the reaction 2 a Fe(II)-siderophore + NADP(+) + H(+) = 2 a Fe(III)-siderophore + NADPH. In terms of biological role, cell surface metalloreductase. May be involved in copper homeostasis. In Saccharomyces cerevisiae (strain ATCC 204508 / S288c) (Baker's yeast), this protein is Ferric/cupric reductase transmembrane component 7 (FRE7).